A 679-amino-acid chain; its full sequence is Methionine--tRNA ligase (679 aa).

Positions P14–H24 match the 'HIGH' region motif. C145, C148, C158, and C161 together coordinate Zn(2+). The 'KMSKS' region motif lies at K331–S335. K334 contacts ATP. Residues A577–K679 enclose the tRNA-binding domain.

This sequence belongs to the class-I aminoacyl-tRNA synthetase family. MetG type 1 subfamily. Homodimer. Zn(2+) is required as a cofactor.

It localises to the cytoplasm. It carries out the reaction tRNA(Met) + L-methionine + ATP = L-methionyl-tRNA(Met) + AMP + diphosphate. Its function is as follows. Is required not only for elongation of protein synthesis but also for the initiation of all mRNA translation through initiator tRNA(fMet) aminoacylation. The protein is Methionine--tRNA ligase of Pseudomonas paraeruginosa (strain DSM 24068 / PA7) (Pseudomonas aeruginosa (strain PA7)).